We begin with the raw amino-acid sequence, 140 residues long: Chorion class A protein Ld2/Ld41 (140 aa).

Residues 1 to 21 (MNSFALLLVCIQACLVQSVFS) form the signal peptide.

This sequence belongs to the chorion protein family.

This protein is one of many from the eggshell of the gypsy moth. The polypeptide is Chorion class A protein Ld2/Ld41 (Lymantria dispar (Gypsy moth)).